The chain runs to 423 residues: Histidine--tRNA ligase (423 aa).

The protein belongs to the class-II aminoacyl-tRNA synthetase family. Homodimer.

It localises to the cytoplasm. It catalyses the reaction tRNA(His) + L-histidine + ATP = L-histidyl-tRNA(His) + AMP + diphosphate + H(+). This chain is Histidine--tRNA ligase, found in Phytoplasma mali (strain AT).